A 478-amino-acid polypeptide reads, in one-letter code: Cytochrome c-552 (478 aa).

The N-terminal stretch at 1–26 (MARKTLRARRFFSLIFPFFFITSVYA) is a signal peptide. His94 lines the heme c pocket. Heme-binding residues include Cys122, Cys125, and Lys126. Heme c contacts are provided by Cys160, Cys163, His164, Cys209, Cys212, and His213. 4 residues coordinate Ca(2+): Glu215, Tyr216, Lys261, and Gln263. Tyr216 contributes to the substrate binding site. His264 lines the substrate pocket. 9 residues coordinate heme c: His275, Cys282, Cys285, His286, His301, Cys314, Cys317, His318, and His393.

Belongs to the cytochrome c-552 family. Requires Ca(2+) as cofactor. Heme c serves as cofactor.

It localises to the periplasm. The enzyme catalyses 6 Fe(III)-[cytochrome c] + NH4(+) + 2 H2O = 6 Fe(II)-[cytochrome c] + nitrite + 8 H(+). It functions in the pathway nitrogen metabolism; nitrate reduction (assimilation). Its function is as follows. Catalyzes the reduction of nitrite to ammonia, consuming six electrons in the process. In Salmonella paratyphi C (strain RKS4594), this protein is Cytochrome c-552.